Here is a 623-residue protein sequence, read N- to C-terminus: Endoglucanase 7 (623 aa).

The Cytoplasmic segment spans residues 1–79 (MHPGNVWGGS…LGCVSVSRTV (79 aa)). A helical; Signal-anchor for type II membrane protein transmembrane segment spans residues 80 to 100 (FLWTVGSIAVLFLVVALPIII). Residues 101 to 623 (VKSLPRHKSA…TPPPPKAWKP (523 aa)) lie on the Extracellular side of the membrane. N-linked (GlcNAc...) asparagine glycosylation is found at asparagine 116, asparagine 221, asparagine 328, asparagine 349, asparagine 412, asparagine 429, and asparagine 464. The active site involves histidine 517. An N-linked (GlcNAc...) asparagine glycan is attached at asparagine 548. Aspartate 565 is a catalytic residue. The N-linked (GlcNAc...) asparagine glycan is linked to asparagine 571. Glutamate 574 is a catalytic residue.

The protein belongs to the glycosyl hydrolase 9 (cellulase E) family. As to expression, expressed in basal region of leaf blade and proximal parts of leaf and floral organ.

The protein localises to the membrane. The enzyme catalyses Endohydrolysis of (1-&gt;4)-beta-D-glucosidic linkages in cellulose, lichenin and cereal beta-D-glucans.. The chain is Endoglucanase 7 (KOR2) from Arabidopsis thaliana (Mouse-ear cress).